A 196-amino-acid chain; its full sequence is Small ribosomal subunit protein uS4c (196 aa).

Positions 17 to 36 are disordered; the sequence is ALPGLTRKTPKSGSNLKKKF. An S4 RNA-binding domain is found at 89-150; the sequence is MRLDNIVFRL…NQRSKRLVQN (62 aa).

The protein belongs to the universal ribosomal protein uS4 family. Part of the 30S ribosomal subunit. Contacts protein S5. The interaction surface between S4 and S5 is involved in control of translational fidelity.

Its subcellular location is the plastid. The protein localises to the chloroplast. Its function is as follows. One of the primary rRNA binding proteins, it binds directly to 16S rRNA where it nucleates assembly of the body of the 30S subunit. Functionally, with S5 and S12 plays an important role in translational accuracy. This Tragus racemosus (Carrot grass) protein is Small ribosomal subunit protein uS4c (rps4).